Consider the following 126-residue polypeptide: Non-specific lipid-transfer protein 15 (126 aa).

An N-terminal signal peptide occupies residues 1–22 (MSKSIFVVCITLLVVLSPTLNA). 4 cysteine pairs are disulfide-bonded: Cys-34-Cys-80, Cys-45-Cys-57, Cys-58-Cys-100, and Cys-78-Cys-114.

The protein belongs to the plant LTP family.

In terms of biological role, plant non-specific lipid-transfer proteins transfer phospholipids as well as galactolipids across membranes. May play a role in wax or cutin deposition in the cell walls of expanding epidermal cells and certain secretory tissues. In Arabidopsis thaliana (Mouse-ear cress), this protein is Non-specific lipid-transfer protein 15 (LTP15).